Consider the following 150-residue polypeptide: 2-aminobenzenesulfonate 2,3-dioxygenase subunit beta (150 aa).

The protein belongs to the bacterial ring-hydroxylating dioxygenase beta subunit family. In terms of assembly, heterotetramer with a alpha2beta2 structure.

It carries out the reaction 2-aminobenzenesulfonate + NADH + O2 + 2 H(+) = 2,3-dihydroxybenzenesulfonate + NH4(+) + NAD(+). Its activity is regulated as follows. Inhibited by o-phenanthroline. Beta subunit of the oxygenase component of the 2-aminobenzenesulfonate 2,3-dioxygenase system (deaminating) (ABSDOS). Can use 2-aminobenzenesulfonate (ABS), benzenesulfonate (BS), 4-toluenesulfonate (TS), 2-nitrobenzenesulfonate, 3- and 4-aminobenzenesulfonates, 4-chloro- and 4-hydroxybenzenesulfonates and pyridine-3-sulfonate as substrates. No desulfonation of ABS to aminocatechol or aminophenol detected. The polypeptide is 2-aminobenzenesulfonate 2,3-dioxygenase subunit beta (Alcaligenes sp).